The following is an 85-amino-acid chain: Large ribosomal subunit protein bL27 (85 aa).

A disordered region spans residues 1–22 (MAHKKAGGSTRNGRDSEAKRMG).

This sequence belongs to the bacterial ribosomal protein bL27 family.

The protein is Large ribosomal subunit protein bL27 of Escherichia coli O6:K15:H31 (strain 536 / UPEC).